A 45-amino-acid chain; its full sequence is Bomanin Short 2 (45 aa).

Residues M1–A20 form the signal peptide. A propeptide spans V21 to P27 (removed by a dipeptidylpeptidase). Cysteines 36 and 39 form a disulfide. A Glycine amide modification is found at G43.

Hemolymph (at protein level).

Its subcellular location is the secreted. Functionally, secreted immune-induced peptide induced by Toll signaling. Has a role in resistance to bacterial and fungal infections. The protein is Bomanin Short 2 of Drosophila melanogaster (Fruit fly).